The chain runs to 886 residues: Alanine--tRNA ligase (886 aa).

The Zn(2+) site is built by His564, His568, Cys666, and His670.

It belongs to the class-II aminoacyl-tRNA synthetase family. The cofactor is Zn(2+).

The protein localises to the cytoplasm. It carries out the reaction tRNA(Ala) + L-alanine + ATP = L-alanyl-tRNA(Ala) + AMP + diphosphate. Functionally, catalyzes the attachment of alanine to tRNA(Ala) in a two-step reaction: alanine is first activated by ATP to form Ala-AMP and then transferred to the acceptor end of tRNA(Ala). Also edits incorrectly charged Ser-tRNA(Ala) and Gly-tRNA(Ala) via its editing domain. This chain is Alanine--tRNA ligase, found in Prochlorococcus marinus (strain MIT 9301).